The sequence spans 351 residues: Glycerol-1-phosphate dehydrogenase [NAD(P)+] (351 aa).

Residues 97-101 and 119-122 contribute to the NAD(+) site; these read GTVID and TSPS. Aspartate 124 provides a ligand contact to substrate. Residue serine 128 coordinates NAD(+). Residue aspartate 171 coordinates substrate. The Zn(2+) site is built by aspartate 171 and histidine 251. Residue histidine 255 participates in substrate binding. Zn(2+) is bound at residue histidine 267.

This sequence belongs to the glycerol-1-phosphate dehydrogenase family. Homodimer. It depends on Zn(2+) as a cofactor.

It is found in the cytoplasm. It carries out the reaction sn-glycerol 1-phosphate + NAD(+) = dihydroxyacetone phosphate + NADH + H(+). The enzyme catalyses sn-glycerol 1-phosphate + NADP(+) = dihydroxyacetone phosphate + NADPH + H(+). It functions in the pathway membrane lipid metabolism; glycerophospholipid metabolism. Its function is as follows. Catalyzes the NAD(P)H-dependent reduction of dihydroxyacetonephosphate (DHAP or glycerone phosphate) to glycerol 1-phosphate (G1P). The G1P thus generated is used as the glycerophosphate backbone of phospholipids in the cellular membranes of Archaea. In Sulfolobus acidocaldarius (strain ATCC 33909 / DSM 639 / JCM 8929 / NBRC 15157 / NCIMB 11770), this protein is Glycerol-1-phosphate dehydrogenase [NAD(P)+].